Here is a 1199-residue protein sequence, read N- to C-terminus: DNA-directed RNA polymerase subunit beta' (1199 aa).

C60, C62, C75, and C78 together coordinate Zn(2+). 3 residues coordinate Mg(2+): D449, D451, and D453. Residues C818, C892, C899, and C902 each coordinate Zn(2+).

The protein belongs to the RNA polymerase beta' chain family. As to quaternary structure, RNAP is composed of a core of 2 alpha, a beta and a beta' subunit. The core is associated with a delta subunit, and at least one of epsilon or omega. When a sigma factor is associated with the core the holoenzyme is formed, which can initiate transcription. Mg(2+) is required as a cofactor. Zn(2+) serves as cofactor.

The enzyme catalyses RNA(n) + a ribonucleoside 5'-triphosphate = RNA(n+1) + diphosphate. Functionally, DNA-dependent RNA polymerase catalyzes the transcription of DNA into RNA using the four ribonucleoside triphosphates as substrates. The protein is DNA-directed RNA polymerase subunit beta' of Bacillus subtilis (strain 168).